The primary structure comprises 328 residues: Ketol-acid reductoisomerase (NADP(+)) (328 aa).

The KARI N-terminal Rossmann domain occupies 2–182 (AKIYRDVDAS…GATRAGVIET (181 aa)). NADP(+) contacts are provided by residues 25 to 28 (YGIQ), Arg-48, Ser-53, and 83 to 86 (DMEQ). His-108 is a catalytic residue. Gly-134 contacts NADP(+). The 146-residue stretch at 183–328 (TFAEETETDL…IEMRRLLFGQ (146 aa)) folds into the KARI C-terminal knotted domain. Residues Asp-191, Glu-195, Glu-227, and Glu-231 each coordinate Mg(2+). Ser-252 contacts substrate.

This sequence belongs to the ketol-acid reductoisomerase family. It depends on Mg(2+) as a cofactor.

The catalysed reaction is (2R)-2,3-dihydroxy-3-methylbutanoate + NADP(+) = (2S)-2-acetolactate + NADPH + H(+). It catalyses the reaction (2R,3R)-2,3-dihydroxy-3-methylpentanoate + NADP(+) = (S)-2-ethyl-2-hydroxy-3-oxobutanoate + NADPH + H(+). It functions in the pathway amino-acid biosynthesis; L-isoleucine biosynthesis; L-isoleucine from 2-oxobutanoate: step 2/4. It participates in amino-acid biosynthesis; L-valine biosynthesis; L-valine from pyruvate: step 2/4. Its function is as follows. Involved in the biosynthesis of branched-chain amino acids (BCAA). Catalyzes an alkyl-migration followed by a ketol-acid reduction of (S)-2-acetolactate (S2AL) to yield (R)-2,3-dihydroxy-isovalerate. In the isomerase reaction, S2AL is rearranged via a Mg-dependent methyl migration to produce 3-hydroxy-3-methyl-2-ketobutyrate (HMKB). In the reductase reaction, this 2-ketoacid undergoes a metal-dependent reduction by NADPH to yield (R)-2,3-dihydroxy-isovalerate. The chain is Ketol-acid reductoisomerase (NADP(+)) from Pyrobaculum arsenaticum (strain DSM 13514 / JCM 11321 / PZ6).